The following is a 1360-amino-acid chain: DNA mismatch repair protein Msh6 (1360 aa).

The interval 1–84 is disordered; sequence MSRQSTLYSF…GLRRSVAPAA (84 aa). A phosphoserine mark is found at S14, S41, and S43. The span at 33–51 shows a compositional bias: low complexity; the sequence is RAAAAPGASPSPGGDAAWS. K70 is subject to N6-acetyllysine. A phosphoserine mark is found at S79, S91, S137, S200, S219, and S227. Residues 92-154 enclose the PWWP domain; that stretch reads PGDLVWAKME…KRLLKPYTGS (63 aa). The segment at 195–362 is disordered; that stretch reads VCDEPSEPEE…SGGGDDSSRP (168 aa). Acidic residues-rich tracts occupy residues 198-209 and 219-230; these read EPSEPEEEEEME and SEEDNEIESEEE. Basic residues predominate over residues 240-249; it reads RSSRQIKKRR. Residues S252, S254, S256, and S261 each carry the phosphoserine modification. The span at 263-273 shows a compositional bias: basic and acidic residues; it reads VEFKPDTKEEG. Residue T269 is modified to Phosphothreonine. S274, S275, S279, S280, and S309 each carry phosphoserine. A compositionally biased stretch (polar residues) spans 320–351; that stretch reads PSATKQATSISSETKNTLRAFSAPQNSESQAH. T488 is subject to Phosphothreonine. The residue at position 504 (K504) is an N6-acetyllysine. S830 and S935 each carry phosphoserine. T1010 is modified (phosphothreonine). 1134-1141 is a binding site for ATP; the sequence is GPNMGGKS.

It belongs to the DNA mismatch repair MutS family. Component of the DNA mismatch repair (MMR) complex composed at least of MSH2, MSH3, MSH6, PMS1 and MLH1. Heterodimer consisting of MSH2-MSH6 (MutS alpha). Forms a ternary complex with MutL alpha (MLH1-PMS1). Interacts with MCM9. Part of the BRCA1-associated genome surveillance complex (BASC), which contains BRCA1, MSH2, MSH6, MLH1, ATM, BLM, PMS2 and the RAD50-MRE11-NBS1 protein complex. This association could be a dynamic process changing throughout the cell cycle and within subnuclear domains. As to quaternary structure, (Microbial infection) Interacts with herpes simplex virus 1 protein UL12. In terms of processing, the N-terminus is blocked. Post-translationally, phosphorylated by PRKCZ, which may prevent MutS alpha degradation by the ubiquitin-proteasome pathway.

It localises to the nucleus. Its subcellular location is the chromosome. Functionally, component of the post-replicative DNA mismatch repair system (MMR). Heterodimerizes with MSH2 to form MutS alpha, which binds to DNA mismatches thereby initiating DNA repair. When bound, MutS alpha bends the DNA helix and shields approximately 20 base pairs, and recognizes single base mismatches and dinucleotide insertion-deletion loops (IDL) in the DNA. After mismatch binding, forms a ternary complex with the MutL alpha heterodimer, which is thought to be responsible for directing the downstream MMR events, including strand discrimination, excision, and resynthesis. ATP binding and hydrolysis play a pivotal role in mismatch repair functions. The ATPase activity associated with MutS alpha regulates binding similar to a molecular switch: mismatched DNA provokes ADP--&gt;ATP exchange, resulting in a discernible conformational transition that converts MutS alpha into a sliding clamp capable of hydrolysis-independent diffusion along the DNA backbone. This transition is crucial for mismatch repair. MutS alpha may also play a role in DNA homologous recombination repair. Recruited on chromatin in G1 and early S phase via its PWWP domain that specifically binds trimethylated 'Lys-36' of histone H3 (H3K36me3): early recruitment to chromatin to be replicated allowing a quick identification of mismatch repair to initiate the DNA mismatch repair reaction. The protein is DNA mismatch repair protein Msh6 of Homo sapiens (Human).